The sequence spans 861 residues: Protein argonaute-4 (861 aa).

In terms of domain architecture, PAZ spans 219-338 (PIIEFMCEVL…LPLEVCNIVA (120 aa)). The Piwi domain maps to 509-820 (LIVVILPGKT…VAFRARYHLV (312 aa)). Residues 825-846 (DSAEGSHVSGQSNGRDPQALAK) are disordered.

It belongs to the argonaute family. Ago subfamily. In terms of assembly, interacts with EIF4B, IMP8, PRMT5, TNRC6A and TNRC6B. Interacts with ZFP36. Ubiquitinated on surface-exposed lysines by a SCF-like E3 ubiquitin-protein ligase complex containing ZSWIM8 during target-directed microRNA degradation (TDMD), a process that mediates degradation of microRNAs (miRNAs). Ubiquitination by the SCF-like E3 ubiquitin-protein ligase complex containing ZSWIM8 leads to its subsequent degradation, thereby exposing miRNAs for degradation. ZSWIM8 recognizes and binds AGO4 when it is engaged with a TDMD target.

Its subcellular location is the cytoplasm. It localises to the P-body. Its function is as follows. Required for RNA-mediated gene silencing (RNAi). Binds to short RNAs such as microRNAs (miRNAs) and represses the translation of mRNAs which are complementary to them. Lacks endonuclease activity and does not appear to cleave target mRNAs. Also required for RNA-directed transcription and replication of the human hapatitis delta virus (HDV). This chain is Protein argonaute-4 (AGO4), found in Homo sapiens (Human).